A 637-amino-acid chain; its full sequence is Sodium-dependent proline transporter (637 aa).

The Cytoplasmic segment spans residues 1-45; that stretch reads MKKLQEAHLRKPVTPDLLMTPSDQGDVDLDVDFAADRGNWTGKLD. Threonine 20 bears the Phosphothreonine mark. Serine 22 bears the Phosphoserine mark. The next 3 membrane-spanning stretches (helical) occupy residues 46-66, 74-93, and 117-137; these read FLLS…FPYR, AFLV…LFFL, and GAGA…NMII. The Extracellular portion of the chain corresponds to 138–214; that stretch reads AYVLFYLFAS…QGIGRPGEIR (77 aa). A glycan (N-linked (GlcNAc...) asparagine) is linked at asparagine 182. The next 9 helical transmembrane spans lie at 215–233, 242–259, 295–312, 324–345, 378–397, 425–443, 459–479, 500–519, and 538–556; these read WNLC…LCIL, VVYF…MLLV, IFYS…FASY, FIVT…FSVL, LPLS…TLGL, VFSG…ILTT, SFGL…VYGI, ACWL…YSIV, and LGIL…GMLV. Residues 557–637 are Cytoplasmic-facing; sequence AVLREEGSLW…IAEEEEESMM (81 aa). Residues serine 573 and serine 582 each carry the phosphoserine modification. Position 588 is a phosphothreonine (threonine 588). Tyrosine 591 carries the phosphotyrosine modification. Residues serine 598 and serine 600 each carry the phosphoserine modification.

Belongs to the sodium:neurotransmitter symporter (SNF) (TC 2.A.22) family. SLC6A7 subfamily. In terms of tissue distribution, expressed in subpopulations of putative glutamatergic pathways of rat brain.

It localises to the synaptic cell membrane. It catalyses the reaction L-proline(out) + chloride(out) + 2 Na(+)(out) = L-proline(in) + chloride(in) + 2 Na(+)(in). It carries out the reaction L-pipecolate(out) + chloride(out) + 2 Na(+)(out) = L-pipecolate(in) + chloride(in) + 2 Na(+)(in). Functionally, brain specific sodium (and chloride)-dependent proline transporter. Terminates the action of proline by its high affinity sodium-dependent reuptake into presynaptic terminals. This is Sodium-dependent proline transporter (Slc6a7) from Rattus norvegicus (Rat).